The sequence spans 365 residues: MDVIGRKKVLVAMSGGVDSSVTAALLLEQGYEVVGVTMQIWDPKIEVIGEEYVGCCSIYAVNDARRVADRLGIPYYVLNFRELFERKVIDYFTEEYLRGRTPNPCIACNRYIKFDALLKKALSLGMDYMATGHYARVVYKDDIGKYGLFRGVDRKKDQTYVLYNLTQDMLRRLLLPLGEYTKEQVRELARKYNLVTADKPESQEICFVPDNDYRKFLKERRGEEIKPGNFVDVNGRVLGQHQGYPYYTIGQRKGLGLALGKPYYVVDIRPETNEVVIGEASEIFSPGLIASDLNFLWFDEIPERFEAQAQIRYNAKPQPAVVERIGKDKVKVVFNEPQRAITPGQAVVFYRGDELLGGGTIEKRL.

ATP contacts are provided by residues 12–19 and Met38; that span reads AMSGGVDS. Catalysis depends on Cys108, which acts as the Nucleophile. Cys108 and Cys206 are joined by a disulfide. Gly132 serves as a coordination point for ATP. The segment at 156–158 is interaction with tRNA; that stretch reads KDQ. Cys206 serves as the catalytic Cysteine persulfide intermediate. An interaction with tRNA region spans residues 312–313; the sequence is RY.

The protein belongs to the MnmA/TRMU family.

The protein localises to the cytoplasm. The enzyme catalyses S-sulfanyl-L-cysteinyl-[protein] + uridine(34) in tRNA + AH2 + ATP = 2-thiouridine(34) in tRNA + L-cysteinyl-[protein] + A + AMP + diphosphate + H(+). Functionally, catalyzes the 2-thiolation of uridine at the wobble position (U34) of tRNA, leading to the formation of s(2)U34. The sequence is that of tRNA-specific 2-thiouridylase MnmA from Carboxydothermus hydrogenoformans (strain ATCC BAA-161 / DSM 6008 / Z-2901).